The following is a 428-amino-acid chain: Enolase (428 aa).

Q163 is a binding site for (2R)-2-phosphoglycerate. The active-site Proton donor is the E205. 3 residues coordinate Mg(2+): D242, E285, and D312. (2R)-2-phosphoglycerate is bound by residues K337, R366, S367, and K388. Residue K337 is the Proton acceptor of the active site.

This sequence belongs to the enolase family. Mg(2+) is required as a cofactor.

It localises to the cytoplasm. The protein resides in the secreted. It is found in the cell surface. It catalyses the reaction (2R)-2-phosphoglycerate = phosphoenolpyruvate + H2O. Its pathway is carbohydrate degradation; glycolysis; pyruvate from D-glyceraldehyde 3-phosphate: step 4/5. Catalyzes the reversible conversion of 2-phosphoglycerate (2-PG) into phosphoenolpyruvate (PEP). It is essential for the degradation of carbohydrates via glycolysis. The protein is Enolase of Rhodopirellula baltica (strain DSM 10527 / NCIMB 13988 / SH1).